Reading from the N-terminus, the 164-residue chain is FMN reductase (NADH) RutF (164 aa).

Belongs to the non-flavoprotein flavin reductase family. RutF subfamily.

It carries out the reaction FMNH2 + NAD(+) = FMN + NADH + 2 H(+). Functionally, catalyzes the reduction of FMN to FMNH2 which is used to reduce pyrimidine by RutA via the Rut pathway. In Klebsiella pneumoniae subsp. pneumoniae (strain ATCC 700721 / MGH 78578), this protein is FMN reductase (NADH) RutF.